Here is a 571-residue protein sequence, read N- to C-terminus: Streptolysin O (571 aa).

An N-terminal signal peptide occupies residues 1–33 (MSNKKTFKKYSRVAGLLTAALIIGNLVTANAES). Positions 30-108 (NAESNKQNTA…KKSEEDHTEE (79 aa)) are disordered. Over residues 37–48 (NTASTETTTTNE) the composition is skewed to low complexity. Basic and acidic residues-rich tracts occupy residues 50-68 (PKPE…KTDD) and 79-108 (APKE…HTEE). The next 4 membrane-spanning stretches (beta stranded) occupy residues 260–273 (KSQI…NSKI), 280–289 (IDFKSISKGE), 358–367 (SNDVEAAFSA), and 375–387 (KTNG…LENS). The short motif at 529–539 (ECTGLAWEWWR) is the Conserved undecapeptide element. Residues 561–562 (TL) carry the Cholesterol binding motif.

Belongs to the cholesterol-dependent cytolysin family. In terms of assembly, homooligomeric pore complex of 35 to 50 subunits; when inserted in the host membrane.

It is found in the secreted. The protein resides in the host cell membrane. In terms of biological role, a cholesterol-dependent toxin that causes cytolysis by forming pores in cholesterol containing host membranes. After binding to target membranes, the protein undergoes a major conformation change, leading to its insertion in the host membrane and formation of an oligomeric pore complex. Cholesterol is required for binding to host membranes, membrane insertion and pore formation; cholesterol binding is mediated by a Thr-Leu pair in the C-terminus. Can be reversibly inactivated by oxidation. The chain is Streptolysin O (slo) from Streptococcus pyogenes serotype M3 (strain ATCC BAA-595 / MGAS315).